Here is a 410-residue protein sequence, read N- to C-terminus: Dipeptidase 1 (410 aa).

A signal peptide spans 1-16 (MWTGWWLWPLVAVCTA). The Zn(2+) site is built by H36 and D38. N-linked (GlcNAc...) asparagine glycans are attached at residues N57 and N62. An intrachain disulfide couples C87 to C170. A Zn(2+)-binding site is contributed by E141. Residue H168 participates in substrate binding. Residues H214 and H235 each contribute to the Zn(2+) site. A disulfide bond links C242 and C274. Residue R246 coordinates substrate. An N-linked (GlcNAc...) asparagine glycan is attached at N279. D304 is a binding site for substrate. The GPI-anchor amidated serine moiety is linked to residue S384. Residues 385 to 410 (GAPSLHLQPGTLLASLVTLLLSLCLL) constitute a propeptide, removed in mature form.

This sequence belongs to the metallo-dependent hydrolases superfamily. Peptidase M19 family. In terms of assembly, homodimer; disulfide-linked. The cofactor is Zn(2+).

It is found in the apical cell membrane. The enzyme catalyses an L-aminoacyl-L-amino acid + H2O = 2 an L-alpha-amino acid. It carries out the reaction leukotriene D4 + H2O = leukotriene E4 + glycine. The catalysed reaction is L-cystine-bis-glycine + 2 H2O = L-cystine + 2 glycine. It catalyses the reaction a beta-lactam + H2O = a substituted beta-amino acid. The enzyme catalyses glycyldehydrophenylalanine + H2O = 2,3-didehydrophenylalanine + glycine. With respect to regulation, inhibited by L-penicillamine. Inhibited by cilastatin. Its function is as follows. Hydrolyzes a wide range of dipeptides including the conversion of leukotriene D4 to leukotriene E4. Hydrolyzes cystinyl-bis-glycine (cys-bis-gly) formed during glutathione degradation. Also possesses beta lactamase activity and hydrolytically inactivates beta-lactam antibiotics. In terms of biological role, independently of its dipeptidase activity, acts as an adhesion receptor for neutrophil recruitment from bloodstream into inflamed lungs and liver. This chain is Dipeptidase 1 (DPEP1), found in Bos taurus (Bovine).